A 405-amino-acid chain; its full sequence is Tyrosine--tRNA ligase (405 aa).

Residue tyrosine 35 participates in L-tyrosine binding. A 'HIGH' region motif is present at residues alanine 40–histidine 49. L-tyrosine-binding residues include tyrosine 166 and glutamine 170. The 'KMSKS' region motif lies at lysine 226–serine 230. Position 229 (lysine 229) interacts with ATP. The S4 RNA-binding domain occupies valine 340–valine 404.

The protein belongs to the class-I aminoacyl-tRNA synthetase family. TyrS type 1 subfamily. Homodimer.

The protein localises to the cytoplasm. The catalysed reaction is tRNA(Tyr) + L-tyrosine + ATP = L-tyrosyl-tRNA(Tyr) + AMP + diphosphate + H(+). In terms of biological role, catalyzes the attachment of tyrosine to tRNA(Tyr) in a two-step reaction: tyrosine is first activated by ATP to form Tyr-AMP and then transferred to the acceptor end of tRNA(Tyr). The sequence is that of Tyrosine--tRNA ligase from Borreliella afzelii (strain PKo) (Borrelia afzelii).